The chain runs to 434 residues: Trigger factor (434 aa).

Residues 163 to 248 (GDRVTIDFEG…LTKIEAQHLP (86 aa)) enclose the PPIase FKBP-type domain.

This sequence belongs to the FKBP-type PPIase family. Tig subfamily.

The protein resides in the cytoplasm. It catalyses the reaction [protein]-peptidylproline (omega=180) = [protein]-peptidylproline (omega=0). Functionally, involved in protein export. Acts as a chaperone by maintaining the newly synthesized protein in an open conformation. Functions as a peptidyl-prolyl cis-trans isomerase. The protein is Trigger factor of Methylibium petroleiphilum (strain ATCC BAA-1232 / LMG 22953 / PM1).